A 152-amino-acid chain; its full sequence is CASP-like protein 5B3 (152 aa).

The Cytoplasmic segment spans residues 1 to 21 (MIDIPGTPGTLTGLVLRISQC). 2 helical membrane-spanning segments follow: residues 22–42 (VFAAGSISYMVTSGGFFSFTA) and 43–63 (FCYLIAAMGLQVIWSFGLAIL). At 64-77 (DTFALVRKKTLLSP) the chain is on the extracellular side. A helical transmembrane segment spans residues 78-98 (VLVSLFVVGDWVTSTLSLAGA). The Cytoplasmic segment spans residues 99-127 (SSSAGITVLYFGDLGSCSFEAECWKYQLS). Residues 128–148 (VALAFLCWITIAVSSLTTLWL) form a helical membrane-spanning segment. The Extracellular portion of the chain corresponds to 149–152 (LASA).

Belongs to the Casparian strip membrane proteins (CASP) family. As to quaternary structure, homodimer and heterodimers. As to expression, expressed in the stele of the root and in leaves.

Its subcellular location is the cell membrane. The sequence is that of CASP-like protein 5B3 from Arabidopsis thaliana (Mouse-ear cress).